We begin with the raw amino-acid sequence, 115 residues long: MRVPSQWMISSRVTVAWNIVGYLVYAALAFVGGFAVWFSLFFAMATDGCHDSACDASYHVFPAMVTMWIGVGAVLLLTLVVMVRNSSRGNVVIGWPFVGLLALGLVYVAADAVLH.

3 helical membrane passes run 23 to 43, 63 to 83, and 90 to 110; these read LVYA…LFFA, AMVT…VVMV, and NVVI…YVAA.

It is found in the cell membrane. This is an uncharacterized protein from Mycobacterium bovis (strain ATCC BAA-935 / AF2122/97).